Here is a 198-residue protein sequence, read N- to C-terminus: HTH-type transcriptional regulator BetI (198 aa).

Positions 8 to 68 (PIRRQQLIDA…ATMRYLISHL (61 aa)) constitute an HTH tetR-type domain. The segment at residues 31–50 (TIAQIARRAGVSNGIISHYF) is a DNA-binding region (H-T-H motif).

It participates in amine and polyamine biosynthesis; betaine biosynthesis via choline pathway [regulation]. In terms of biological role, repressor involved in the biosynthesis of the osmoprotectant glycine betaine. It represses transcription of the choline transporter BetT and the genes of BetAB involved in the synthesis of glycine betaine. The polypeptide is HTH-type transcriptional regulator BetI (Serratia proteamaculans (strain 568)).